The primary structure comprises 193 residues: Protein SINE3 (193 aa).

The tract at residues 15 to 35 (SELGAKRLKDPEMKNRKVTTE) is disordered. Basic and acidic residues predominate over residues 18–35 (GAKRLKDPEMKNRKVTTE). One can recognise a KASH domain in the interval 155–193 (VTVKFRIVLLSFILWAILAAIVVFFSSGEERAYRGPLPT). Residues 161 to 181 (IVLLSFILWAILAAIVVFFSS) form a helical membrane-spanning segment. The Required for nuclear localization motif lies at 190 to 193 (PLPT).

In terms of assembly, interacts with SUN1 and SUN2.

Its subcellular location is the nucleus membrane. This chain is Protein SINE3, found in Arabidopsis thaliana (Mouse-ear cress).